The sequence spans 227 residues: MLCNLIHNIHKEGYIIIMISFLLSCIGFAISCSLGIIFLVASLLCIYFFRDPIRIVPEGDHLIISPADGIILNIEQVNSPIDNSTQVLCISIFLNVLNVHVNRIPVSGTIKATEYIPGRFISASLNKSSELNERQRIVIESNVNHHTIIVDQIAGLIARRIVCNAYEGQNVNSGERFGIIRFGSRVNIYLPLNIHISAFKGQTVIGGETILAYLEDYPHKQLTAKFI.

Ser184 serves as the catalytic Schiff-base intermediate with substrate; via pyruvic acid. Residue Ser184 is modified to Pyruvic acid (Ser); by autocatalysis.

This sequence belongs to the phosphatidylserine decarboxylase family. PSD-A subfamily. Heterodimer of a large membrane-associated beta subunit and a small pyruvoyl-containing alpha subunit. The cofactor is pyruvate. Post-translationally, is synthesized initially as an inactive proenzyme. Formation of the active enzyme involves a self-maturation process in which the active site pyruvoyl group is generated from an internal serine residue via an autocatalytic post-translational modification. Two non-identical subunits are generated from the proenzyme in this reaction, and the pyruvate is formed at the N-terminus of the alpha chain, which is derived from the carboxyl end of the proenzyme. The post-translation cleavage follows an unusual pathway, termed non-hydrolytic serinolysis, in which the side chain hydroxyl group of the serine supplies its oxygen atom to form the C-terminus of the beta chain, while the remainder of the serine residue undergoes an oxidative deamination to produce ammonia and the pyruvoyl prosthetic group on the alpha chain.

The protein localises to the cell membrane. It carries out the reaction a 1,2-diacyl-sn-glycero-3-phospho-L-serine + H(+) = a 1,2-diacyl-sn-glycero-3-phosphoethanolamine + CO2. It participates in phospholipid metabolism; phosphatidylethanolamine biosynthesis; phosphatidylethanolamine from CDP-diacylglycerol: step 2/2. In terms of biological role, catalyzes the formation of phosphatidylethanolamine (PtdEtn) from phosphatidylserine (PtdSer). The polypeptide is Phosphatidylserine decarboxylase proenzyme (Ehrlichia ruminantium (strain Welgevonden)).